Here is an 89-residue protein sequence, read N- to C-terminus: Small ribosomal subunit protein uS15 (89 aa).

Belongs to the universal ribosomal protein uS15 family. Part of the 30S ribosomal subunit. Forms a bridge to the 50S subunit in the 70S ribosome, contacting the 23S rRNA.

Its function is as follows. One of the primary rRNA binding proteins, it binds directly to 16S rRNA where it helps nucleate assembly of the platform of the 30S subunit by binding and bridging several RNA helices of the 16S rRNA. Functionally, forms an intersubunit bridge (bridge B4) with the 23S rRNA of the 50S subunit in the ribosome. This chain is Small ribosomal subunit protein uS15, found in Buchnera aphidicola subsp. Cinara cedri (strain Cc).